A 334-amino-acid chain; its full sequence is NAC domain-containing protein 66 (334 aa).

One can recognise an NAC domain in the interval 11-175 (VPPGFRFHPT…GWVVCRVFKK (165 aa)). A DNA-binding region spans residues 111-181 (IGMRKTLVFY…VFKKNNLCKN (71 aa)).

As to expression, mostly expressed in anthers. Also present in pollen, base of siliques and inflorescence stems.

The protein localises to the nucleus. Transcription activator of genes involved in biosynthesis of secondary walls. Together with NST1, required for the secondary cell wall thickening of the anther endocethium, which is necessary for anther dehiscence. May also regulate the secondary cell wall lignification of other tissues such as tracheary elements. The polypeptide is NAC domain-containing protein 66 (NAC066) (Arabidopsis thaliana (Mouse-ear cress)).